Here is a 369-residue protein sequence, read N- to C-terminus: tRNA/tmRNA (uracil-C(5))-methyltransferase (369 aa).

S-adenosyl-L-methionine-binding residues include Gln193, Tyr221, Asn226, Glu242, and Asp302. Residue Cys327 is the Nucleophile of the active site. Catalysis depends on Glu361, which acts as the Proton acceptor.

This sequence belongs to the class I-like SAM-binding methyltransferase superfamily. RNA M5U methyltransferase family. TrmA subfamily.

It carries out the reaction uridine(54) in tRNA + S-adenosyl-L-methionine = 5-methyluridine(54) in tRNA + S-adenosyl-L-homocysteine + H(+). The enzyme catalyses uridine(341) in tmRNA + S-adenosyl-L-methionine = 5-methyluridine(341) in tmRNA + S-adenosyl-L-homocysteine + H(+). Functionally, dual-specificity methyltransferase that catalyzes the formation of 5-methyluridine at position 54 (m5U54) in all tRNAs, and that of position 341 (m5U341) in tmRNA (transfer-mRNA). The protein is tRNA/tmRNA (uracil-C(5))-methyltransferase of Sulfurimonas denitrificans (strain ATCC 33889 / DSM 1251) (Thiomicrospira denitrificans (strain ATCC 33889 / DSM 1251)).